We begin with the raw amino-acid sequence, 393 residues long: Acetyl-CoA acetyltransferase (393 aa).

Cys88 (acyl-thioester intermediate) is an active-site residue. Active-site proton acceptor residues include His349 and Cys379.

The protein belongs to the thiolase-like superfamily. Thiolase family.

It is found in the cytoplasm. It catalyses the reaction 2 acetyl-CoA = acetoacetyl-CoA + CoA. It participates in metabolic intermediate biosynthesis; (R)-mevalonate biosynthesis; (R)-mevalonate from acetyl-CoA: step 1/3. The polypeptide is Acetyl-CoA acetyltransferase (atoB) (Pseudomonas aeruginosa (strain ATCC 15692 / DSM 22644 / CIP 104116 / JCM 14847 / LMG 12228 / 1C / PRS 101 / PAO1)).